A 236-amino-acid chain; its full sequence is MSTGLLAKKVGMTQIFTPEGDCVPVTVLEAGPCTVVRRKTAEKDGYDAVVIGFGVVDEKHAHRLSKPEVGVFKKAGTPIFRHVKEIRVKDAKQLGDLKAGDVLTVDKVFKANQRIDVAGVTKGRGFTGVMKRWNMKGAARDSSTAHEHHRHVGAIGQRKTPGKVWKGKHLPGHYGVDNVTIQNLTVVGIEAEQNVLLVSGAVPGHADGLLFVNTAAKGQPRIKQKQEVRERAKPKV.

The protein belongs to the universal ribosomal protein uL3 family. Part of the 50S ribosomal subunit. Forms a cluster with proteins L14 and L19.

One of the primary rRNA binding proteins, it binds directly near the 3'-end of the 23S rRNA, where it nucleates assembly of the 50S subunit. This is Large ribosomal subunit protein uL3 from Anaeromyxobacter dehalogenans (strain 2CP-1 / ATCC BAA-258).